Consider the following 134-residue polypeptide: Nogalonic acid methyl ester cyclase (134 aa).

Q95 contributes to the nogalaviketone binding site. The active-site Proton donor/acceptor is the D111.

Belongs to the polyketide cyclase DnrD family. As to quaternary structure, homotetramer. Dimer of dimers.

The catalysed reaction is nogalaviketone = methyl nogalonate. Its pathway is antibiotic biosynthesis. In terms of biological role, involved in the biosynthesis of the aromatic polyketide antibiotic nogalamycin. Catalyzes the formation of nogalaviketone from nogalonic acid methyl ester (NAME), the last ring-closure step in the biosynthesis of nogalamycin. The chain is Nogalonic acid methyl ester cyclase from Streptomyces nogalater.